Here is a 393-residue protein sequence, read N- to C-terminus: Formate-dependent phosphoribosylglycinamide formyltransferase (393 aa).

N(1)-(5-phospho-beta-D-ribosyl)glycinamide-binding positions include 22-23 (EL) and glutamate 82. ATP contacts are provided by residues arginine 114, lysine 155, 160 to 165 (SSGHGQ), 195 to 198 (EGFI), and glutamate 203. Residues 119 to 308 (RLAAEELGLK…QFALHARAIL (190 aa)) form the ATP-grasp domain. Mg(2+)-binding residues include glutamate 267 and glutamate 279. N(1)-(5-phospho-beta-D-ribosyl)glycinamide contacts are provided by residues aspartate 286, lysine 356, and 363-364 (RR).

The protein belongs to the PurK/PurT family. In terms of assembly, homodimer.

The catalysed reaction is N(1)-(5-phospho-beta-D-ribosyl)glycinamide + formate + ATP = N(2)-formyl-N(1)-(5-phospho-beta-D-ribosyl)glycinamide + ADP + phosphate + H(+). Its pathway is purine metabolism; IMP biosynthesis via de novo pathway; N(2)-formyl-N(1)-(5-phospho-D-ribosyl)glycinamide from N(1)-(5-phospho-D-ribosyl)glycinamide (formate route): step 1/1. Functionally, involved in the de novo purine biosynthesis. Catalyzes the transfer of formate to 5-phospho-ribosyl-glycinamide (GAR), producing 5-phospho-ribosyl-N-formylglycinamide (FGAR). Formate is provided by PurU via hydrolysis of 10-formyl-tetrahydrofolate. This is Formate-dependent phosphoribosylglycinamide formyltransferase from Actinobacillus pleuropneumoniae serotype 5b (strain L20).